The primary structure comprises 157 residues: Protein FAM218A (157 aa).

The tract at residues 104 to 127 (PAVTPPKLPGHSKSEGPPGKVRKR) is disordered.

In Homo sapiens (Human), this protein is Protein FAM218A (FAM218A).